A 214-amino-acid chain; its full sequence is MKVRDLMDKNFAKIYVDETVEDAINLLKKKKRFSAPIVDKEDRLVGWVTTLELLGISEKDFKKPITEFMRPVEEVITVYEDDEARNVVLKFVKYKVVSIPVLTRDGRVIGMVRNCDVVKTLAKLYEIPVYKIFKELHNHIGDISWEELMEAAAVVTKRMTGEDITPQEYEERIKKTTFGKAIWACGGLEKFFVGLIEIGMVALARKLAKRRKGG.

CBS domains follow at residues 7–65 (MDKN…KKPI) and 69–129 (MRPV…EIPV).

This is an uncharacterized protein from Methanocaldococcus jannaschii (strain ATCC 43067 / DSM 2661 / JAL-1 / JCM 10045 / NBRC 100440) (Methanococcus jannaschii).